We begin with the raw amino-acid sequence, 493 residues long: Probable plastidic glucose transporter 2 (493 aa).

The segment covering 1–14 (MLGLQRETSSMYKR) has biased composition (polar residues). The tract at residues 1–24 (MLGLQRETSSMYKRTSSRDYSPMI) is disordered. 12 helical membrane-spanning segments follow: residues 52 to 72 (LPHV…LGVV), 94 to 114 (LVVS…GGVA), 128 to 148 (LPMI…VMLL), 151 to 171 (FLVG…VTEV), 182 to 202 (SFIQ…GIPV), 211 to 231 (VCFW…FLCA), 293 to 313 (VVFI…NAVF), 329 to 349 (LGNI…MVLM), 356 to 376 (LLLL…VGAT), 392 to 412 (GTLV…GLLL), 424 to 444 (AMAF…LLFL), and 450 to 470 (LGPR…VMFV).

Belongs to the major facilitator superfamily. Sugar transporter (TC 2.A.1.1) family.

The protein localises to the plastid. It localises to the chloroplast membrane. In terms of biological role, may be involved in the efflux of glucose towards the cytosol. In Arabidopsis thaliana (Mouse-ear cress), this protein is Probable plastidic glucose transporter 2.